Here is a 159-residue protein sequence, read N- to C-terminus: Ribosomal RNA large subunit methyltransferase H (159 aa).

S-adenosyl-L-methionine-binding positions include Leu76, Gly108, and Leu127–Phe132.

The protein belongs to the RNA methyltransferase RlmH family. Homodimer.

The protein resides in the cytoplasm. It carries out the reaction pseudouridine(1915) in 23S rRNA + S-adenosyl-L-methionine = N(3)-methylpseudouridine(1915) in 23S rRNA + S-adenosyl-L-homocysteine + H(+). Specifically methylates the pseudouridine at position 1915 (m3Psi1915) in 23S rRNA. The chain is Ribosomal RNA large subunit methyltransferase H from Acetivibrio thermocellus (strain ATCC 27405 / DSM 1237 / JCM 9322 / NBRC 103400 / NCIMB 10682 / NRRL B-4536 / VPI 7372) (Clostridium thermocellum).